The following is a 213-amino-acid chain: Ergothioneine transport ATP-binding protein EgtV (213 aa).

Residues 5 to 212 (VTIENVSFNY…ATKTLEIKAL (208 aa)) enclose the ABC transporter domain. 37–44 (GESGSGKS) contacts ATP.

Belongs to the ABC transporter superfamily. In terms of assembly, the complex is composed of two ATP-binding proteins (EgtV) and two transmembrane proteins (EgtU).

Its subcellular location is the cell inner membrane. It carries out the reaction ergothioneine(out) + ATP + H2O = ergothioneine(in) + ADP + phosphate + H(+). In terms of biological role, part of the ABC transporter complex EgtUV involved in the uptake of ergothioneine (EGT), a natural low-molecular weight (LMW) thiol antioxidant which protects H.pylori against bleach stress. Responsible for energy coupling to the transport system. The polypeptide is Ergothioneine transport ATP-binding protein EgtV (Helicobacter pylori (strain G27)).